Reading from the N-terminus, the 378-residue chain is Aminotransferase apf4 (378 aa).

Pyridoxal 5'-phosphate is bound at residue arginine 88. At lysine 189 the chain carries N6-(pyridoxal phosphate)lysine. Glutamate 228 serves as a coordination point for pyridoxal 5'-phosphate. The tract at residues glutamate 359 to glutamate 378 is disordered.

The protein belongs to the class-IV pyridoxal-phosphate-dependent aminotransferase family. Requires pyridoxal 5'-phosphate as cofactor.

It functions in the pathway secondary metabolite biosynthesis. In terms of biological role, aminotransferase; part of the gene cluster that mediates the biosynthesis of the cyclic tetrapeptide apicidin F (APF). The non-ribosomal peptide synthetase apf1 incorporates four different amino acids to produce apicidin F: L-phenylalanine, D-pipecolic acid (D-pip), N-methoxy-L-tryptophan and L-2-aminooctanedioic acid. L-Phenylalanine is the only proteinogenic amino acid directly used by apf1. The 3 other apf1 substrates are non-proteinogenic and have to be modified by other enzymes of the cluster. Lysine is converted to delta-1-pyrroline-5-carboxylate (P5C) which is reduced to L-pipecolic acid (L-pip) by apf3. L-pip is epimerized to D-pip, probably by apf1 activity, prior to incorporation. L-Tryptophan is N-oxidyzed by one of the cytochrome P450 monooxygenases (apf7 or apf8), and further methylated at the hydroxy group by the O-methyltransferase apf6 to yield N-methoxy-L-tryptophan. The synthesis of the fourth apf1 substrate is more complex. The fatty acid synthase apf5 is involved in the synthesis of the octanoic acid backbone of L-2-aminooctanedioic acid by fixing one acetyl-CoA unit and three malonyl-CoA units. Then one of the cytochrome P450 monooxygenases (apf7 or apf8) may oxidize this backbone to 2-oxooctanoic acid. The aminotransferase apf4 is predicted to catalyze the exchange of the keto group with an amino group. The next step would be the oxidation of 2-aminooctanoic acid by one of the cytochrome P450 monooxygenases (apf7 or apf8). The last step is the oxidation of 2-amino-8-hydroxyoctanoic acid to 2-aminooctanedioic acid is catalyzed by the FAD-dependent monooxygenase apf9. This is Aminotransferase apf4 from Gibberella fujikuroi (strain CBS 195.34 / IMI 58289 / NRRL A-6831) (Bakanae and foot rot disease fungus).